The chain runs to 488 residues: MASLGSAAAGEPATGAEAEPGPPAPPPPPPPPPAPSPSALGPLLPLQREPLYNWQATKASLKERFAFLFNSELLSDVRFVLGKGRGAAAAGGPQRIPAHRFVLAAGSAVFDAMFNGGMATTSAEIELPDVEPAAFLALLRFLYSDEVQIGPETVMTTLYTAKKYAVPALEAHCVEFLTKHLRADNAFMLLTQARLFDEPQLASLCLDTIDKSTVDAISAEGFTDIDIDTLCAVLERDTLSIRESRLFGAIVRWAEAECQRQQLAVTFGNKQKVLGKALSLIRFPLMTIEEFAAGPAQSGILSDREVVNLFLHFTVNPKPRVEYIDRPRCCLRGKECCINRFQQVESRWGYSGTSDRIRFTVNRRISVVGFGLYGSIHGPTDYQVNIQIIEYEKKQTLGQNDTGFSCDGTANTFRVMFKEPIEILPNVCYTACATLKGPDSHYGTKGLKKVVHETPAASKTVFLFFSSPGNNNGTSIEDGQIPEIIFYT.

Residues 1 to 19 (MASLGSAAAGEPATGAEAE) are compositionally biased toward low complexity. Residues 1-42 (MASLGSAAAGEPATGAEAEPGPPAPPPPPPPPPAPSPSALGP) are disordered. Positions 20-36 (PGPPAPPPPPPPPPAPS) are enriched in pro residues. In terms of domain architecture, BTB spans 75–151 (SDVRFVLGKG…LYSDEVQIGP (77 aa)). Arginine 85 is subject to Omega-N-methylarginine. Positions 190–290 (LTQARLFDEP…IRFPLMTIEE (101 aa)) constitute a BACK domain.

In terms of assembly, interacts (via C-terminus) with TOP1. Interacts with TRIM5 isoform Delta. Interacts with CUL3. In terms of tissue distribution, strongly expressed in heart and skeletal muscle. Weakly expressed in myoblast C2C12 cells, but strongly up-regulated upon their differentiation into myotubes.

Its subcellular location is the cytoplasm. The protein operates within protein modification; protein ubiquitination. Its function is as follows. Probable substrate-specific adapter of an E3 ubiquitin-protein ligase complex which mediates the ubiquitination and subsequent proteasomal degradation of target proteins. Seems to regulate expression levels and/or subnuclear distribution of TOP1, via an unknown mechanism. May play a role in mesenchymal differentiation where it promotes myogenic differentiation and suppresses adipogenesis. This is BTB/POZ domain-containing protein 1 (Btbd1) from Mus musculus (Mouse).